Consider the following 52-residue polypeptide: Large ribosomal subunit protein bL32c (52 aa).

This sequence belongs to the bacterial ribosomal protein bL32 family.

It localises to the plastid. The protein resides in the chloroplast. The chain is Large ribosomal subunit protein bL32c from Lobularia maritima (Sweet alyssum).